A 270-amino-acid polypeptide reads, in one-letter code: Putative pyruvate, phosphate dikinase regulatory protein 1 (270 aa).

151-158 serves as a coordination point for ADP; the sequence is GVSRTSKT.

It belongs to the pyruvate, phosphate/water dikinase regulatory protein family. PDRP subfamily.

It carries out the reaction N(tele)-phospho-L-histidyl/L-threonyl-[pyruvate, phosphate dikinase] + ADP = N(tele)-phospho-L-histidyl/O-phospho-L-threonyl-[pyruvate, phosphate dikinase] + AMP + H(+). The catalysed reaction is N(tele)-phospho-L-histidyl/O-phospho-L-threonyl-[pyruvate, phosphate dikinase] + phosphate + H(+) = N(tele)-phospho-L-histidyl/L-threonyl-[pyruvate, phosphate dikinase] + diphosphate. Bifunctional serine/threonine kinase and phosphorylase involved in the regulation of the pyruvate, phosphate dikinase (PPDK) by catalyzing its phosphorylation/dephosphorylation. In Enterococcus faecalis (strain ATCC 700802 / V583), this protein is Putative pyruvate, phosphate dikinase regulatory protein 1.